We begin with the raw amino-acid sequence, 30 residues long: Elongation factor 1-delta (30 aa).

It belongs to the EF-1-beta/EF-1-delta family. In terms of assembly, EF-1 is composed of 4 subunits: alpha, beta (1B-alpha=beta'), delta (1B-beta), and gamma (1B-gamma).

In terms of biological role, EF-1-beta and EF-1-delta stimulate the exchange of GDP bound to EF-1-alpha to GTP. The chain is Elongation factor 1-delta from Populus euphratica (Euphrates poplar).